The following is a 501-amino-acid chain: Inactive cytidine monophosphate-N-acetylneuraminic acid hydroxylase (501 aa).

It belongs to the CMP-Neu5Ac hydroxylase family. As to expression, widely expressed. Highly expressed in thymus. Not expressed in brain. May be expressed in adult stem cells (at protein level).

It localises to the cytoplasm. Sialic acids are components of carbohydrate chains of glycoconjugates and are involved in cell-cell recognition and cell-pathogen interactions. That protein has no CMP-N-acetylneuraminate monooxygenase activity and is not able to convert CMP-N-acetylneuraminic acid (CMP-Neu5Ac) into its hydroxylated derivative CMP-N-glycolylneuraminic acid (CMP-Neu5Gc), a sialic acid abundantly expressed at the surface of many cells in vertebrates. However, it may play a role in Wnt signaling. The protein is Inactive cytidine monophosphate-N-acetylneuraminic acid hydroxylase (CMAHP) of Homo sapiens (Human).